The following is a 160-amino-acid chain: Fimbrial protein (160 aa).

Positions M1–G7 are cleaved as a propeptide — leader sequence. F8 bears the N-methylphenylalanine mark. The helical transmembrane segment at F8 to I28 threads the bilayer.

The protein belongs to the N-Me-Phe pilin family. The pili are polar flexible filaments of about 5.4 nanometers diameter and 2.5 micrometers average length; they consist of only a single polypeptide chain arranged in a helical configuration of five subunits per turn in the assembled pilus.

The protein resides in the fimbrium. It localises to the membrane. The polypeptide is Fimbrial protein (fimA) (Dichelobacter nodosus (Bacteroides nodosus)).